The sequence spans 139 residues: Large ribosomal subunit protein uL16c (139 aa).

Residues 1 to 20 (MLSPKRTKYRKHHRGRMKGK) form a disordered region.

It belongs to the universal ribosomal protein uL16 family. As to quaternary structure, part of the 50S ribosomal subunit.

The protein resides in the plastid. Its subcellular location is the chloroplast. This Pleurastrum terricola (Filamentous green alga) protein is Large ribosomal subunit protein uL16c.